The primary structure comprises 463 residues: MNYQSYSDTICAISSGNNINQPISIIRISGKNAQSIVSKIFSGKVGENKTITYGFIKENSEIVDEVLVSWFLGEPQGDITVYNNYVGEPLIEINAHGGMIVTNKILELLISNGARLAEPGEFTRRAFLNGKLDLSKADAIHNLIMSKTRLQARNEASKLKGSASKVIKDLLKELSLLIGSIEVGIDYPEYIDDYEEDLKANSKEDINLTRINKLIARLEKIVKSSETALNYFEGIKLAIVGKPNVGKSSLLNTMLKEDKAIVTNVAGTTRDIVEGIYYLDNFIFKIIDTAGIRKTRQEIEKIGIERSYKAILDADIVLHLFDNLNSEDEFDLDIKKIVQENNKNYIKVVNKSDLKSDIKWSDDFIKISAKNNDIKNLEDHLLKIYSGFDFNSEDIFATARQIKLFKESLEYAYAAREEIKNQLTYITAIVDLNNLFDTLQLIIGNSNREDLLDEMFKNFCLGK.

Residues arginine 27, glutamate 92, and lysine 131 each coordinate (6S)-5-formyl-5,6,7,8-tetrahydrofolate. Residues 234 to 386 enclose the TrmE-type G domain; it reads GIKLAIVGKP…LEDHLLKIYS (153 aa). Residue asparagine 244 coordinates K(+). Residues 244-249, 263-269, and 288-291 contribute to the GTP site; these read NVGKSS, TNVAGTT, and DTAG. Serine 248 contributes to the Mg(2+) binding site. K(+)-binding residues include threonine 263, valine 265, and threonine 268. Residue threonine 269 participates in Mg(2+) binding. A (6S)-5-formyl-5,6,7,8-tetrahydrofolate-binding site is contributed by lysine 463.

It belongs to the TRAFAC class TrmE-Era-EngA-EngB-Septin-like GTPase superfamily. TrmE GTPase family. In terms of assembly, homodimer. Heterotetramer of two MnmE and two MnmG subunits. K(+) is required as a cofactor.

Its subcellular location is the cytoplasm. In terms of biological role, exhibits a very high intrinsic GTPase hydrolysis rate. Involved in the addition of a carboxymethylaminomethyl (cmnm) group at the wobble position (U34) of certain tRNAs, forming tRNA-cmnm(5)s(2)U34. The protein is tRNA modification GTPase MnmE of Mycoplasmopsis synoviae (strain 53) (Mycoplasma synoviae).